The primary structure comprises 133 residues: Ribonucleases P/MRP protein subunit POP8 (133 aa).

As to quaternary structure, component of nuclear RNase P and RNase MRP complexes. RNase P consists of an RNA moiety and at least 9 protein subunits including POP1, POP3, POP4, POP5, POP6, POP7, POP8, RPP1 and RPR2. RNase MRP complex consists of an RNA moiety and at least 10 protein subunits including POP1, POP3, POP4, POP5, POP6, POP7, POP8, RMP1, RPP1 and SNM1, many of which are shared with the RNase P complex.

The protein localises to the nucleus. The catalysed reaction is Endonucleolytic cleavage of RNA, removing 5'-extranucleotides from tRNA precursor.. In terms of biological role, component of ribonuclease P, a protein complex that generates mature tRNA molecules by cleaving their 5'-ends. Also a component of RNase MRP, which cleaves pre-rRNA sequences. This Saccharomyces cerevisiae (strain ATCC 204508 / S288c) (Baker's yeast) protein is Ribonucleases P/MRP protein subunit POP8 (POP8).